Reading from the N-terminus, the 201-residue chain is Small ribosomal subunit protein uS4c (201 aa).

Residues 15–45 (LGDLPGLSRKAIKRSYPPGEHGQKSRKPSEY) are disordered. Residues 35-45 (HGQKSRKPSEY) show a composition bias toward basic and acidic residues. In terms of domain architecture, S4 RNA-binding spans 90-153 (MRLDNTVFRL…ASRKLVENYL (64 aa)).

It belongs to the universal ribosomal protein uS4 family. As to quaternary structure, part of the 30S ribosomal subunit. Contacts protein S5. The interaction surface between S4 and S5 is involved in control of translational fidelity.

The protein resides in the plastid. It is found in the chloroplast. Its function is as follows. One of the primary rRNA binding proteins, it binds directly to 16S rRNA where it nucleates assembly of the body of the 30S subunit. In terms of biological role, with S5 and S12 plays an important role in translational accuracy. The polypeptide is Small ribosomal subunit protein uS4c (rps4) (Pyropia yezoensis (Susabi-nori)).